The following is a 563-amino-acid chain: NAD(P)H-quinone oxidoreductase chain 4 (563 aa).

15 consecutive transmembrane segments (helical) span residues 25-45, 56-76, 90-110, 111-131, 133-153, 157-177, 189-209, 230-250, 264-284, 298-318, 335-355, 356-376, 397-417, 438-458, and 485-505; these read FPWLSLSILFPIVGAFLVPFI, WFALGIALVTFLITVAAYLYG, VSWLPDLGLTWAVGADGISMP, LILLTSFITALAVLAAWPVTF, PKLFFFLILAMDGGQIAVFAV, LLFFLAWELELLPVYLLLAIW, FIIYTAGSSLFILLVALAMGF, GFQLLCYAGLLIAFGVKLPIV, TAPVHMLLAGILLKMGGYALM, FAPLLIVLGVVNIIYAALTSF, MGFVLIGIGSFSALGTSGAML, QMISHGLIGASLFFLVGATYD, FALWTVCALASLALPGMSGFV, IVIAGLAAIGVILTPIYLLSM, and VYIISCLLVPIIGIGLYPRLM.

It belongs to the complex I subunit 4 family.

Its subcellular location is the cellular thylakoid membrane. It catalyses the reaction a plastoquinone + NADH + (n+1) H(+)(in) = a plastoquinol + NAD(+) + n H(+)(out). The catalysed reaction is a plastoquinone + NADPH + (n+1) H(+)(in) = a plastoquinol + NADP(+) + n H(+)(out). Its function is as follows. NDH-1 shuttles electrons from NAD(P)H, via FMN and iron-sulfur (Fe-S) centers, to quinones in the respiratory chain. The immediate electron acceptor for the enzyme in this species is believed to be plastoquinone. Couples the redox reaction to proton translocation (for every two electrons transferred, four hydrogen ions are translocated across the cytoplasmic membrane), and thus conserves the redox energy in a proton gradient. The polypeptide is NAD(P)H-quinone oxidoreductase chain 4 (Prochlorococcus marinus (strain MIT 9313)).